Consider the following 374-residue polypeptide: Protein-glutamate methylesterase/protein-glutamine glutaminase 1 (374 aa).

A Response regulatory domain is found at 4 to 121; it reads KVLVVDDSSF…ATNKDEAILL (118 aa). Residue D55 is modified to 4-aspartylphosphate. The disordered stretch occupies residues 141–170; sequence PSVAPVTPRPTTGSAVGNATTPVQSASAPV. The span at 149–167 shows a compositional bias: polar residues; it reads RPTTGSAVGNATTPVQSAS. Residues 174–374 form the CheB-type methylesterase domain; the sequence is PLSSIRASGK…ESILKESARG (201 aa). Catalysis depends on residues S193, H220, and D316.

It belongs to the CheB family. In terms of processing, phosphorylated by CheA. Phosphorylation of the N-terminal regulatory domain activates the methylesterase activity.

The protein localises to the cytoplasm. The catalysed reaction is [protein]-L-glutamate 5-O-methyl ester + H2O = L-glutamyl-[protein] + methanol + H(+). It catalyses the reaction L-glutaminyl-[protein] + H2O = L-glutamyl-[protein] + NH4(+). Its function is as follows. Involved in chemotaxis. Part of a chemotaxis signal transduction system that modulates chemotaxis in response to various stimuli. Catalyzes the demethylation of specific methylglutamate residues introduced into the chemoreceptors (methyl-accepting chemotaxis proteins or MCP) by CheR. Also mediates the irreversible deamidation of specific glutamine residues to glutamic acid. The polypeptide is Protein-glutamate methylesterase/protein-glutamine glutaminase 1 (Shewanella oneidensis (strain ATCC 700550 / JCM 31522 / CIP 106686 / LMG 19005 / NCIMB 14063 / MR-1)).